The following is a 210-amino-acid chain: Thymidylate kinase (210 aa).

9-16 (GPEGAGKT) serves as a coordination point for ATP.

It belongs to the thymidylate kinase family.

It catalyses the reaction dTMP + ATP = dTDP + ADP. Phosphorylation of dTMP to form dTDP in both de novo and salvage pathways of dTTP synthesis. This chain is Thymidylate kinase, found in Thermomicrobium roseum (strain ATCC 27502 / DSM 5159 / P-2).